We begin with the raw amino-acid sequence, 55 residues long: Large ribosomal subunit protein bL33 (55 aa).

It belongs to the bacterial ribosomal protein bL33 family.

This is Large ribosomal subunit protein bL33 from Aromatoleum aromaticum (strain DSM 19018 / LMG 30748 / EbN1) (Azoarcus sp. (strain EbN1)).